Here is a 319-residue protein sequence, read N- to C-terminus: Vomeronasal type-1 receptor 51 (319 aa).

Over 1 to 31 (MNEILFFSPQPLFSHMMNENSRVHTHSNLRH) the chain is Extracellular. Residues 32-52 (IFFSEIGIGISGNSFLLLFHI) traverse the membrane as a helical segment. At 53 to 65 (LKFIHGHRSRLSD) the chain is on the cytoplasmic side. Residues 66–86 (LPIGLLSLIHLLMLLVMAFIA) form a helical membrane-spanning segment. At 87-109 (TDIFISWRGWDDIICKFLVYLYR) the chain is on the extracellular side. A disulfide bridge connects residues Cys-101 and Cys-188. The chain crosses the membrane as a helical span at residues 110-130 (VLRGLSLCTTSMLSVLQAIIL). Residues 131–150 (SPRSSCLAKFKRKSLHHISC) are Cytoplasmic-facing. The chain crosses the membrane as a helical span at residues 151-171 (AILFLSVLYMLIGSQLLVSII). Over 172–203 (ATPNLTTNDFIYVTQSCSILPLSYVMQSMFST) the chain is Extracellular. Asn-175 carries an N-linked (GlcNAc...) asparagine glycan. Residues 204–224 (LLVIRDVFLISLMVLSTWYMV) form a helical membrane-spanning segment. The Cytoplasmic segment spans residues 225–254 (ALLCRHRKKTQHLQGISLSPKTSPKQRATQ). A helical membrane pass occupies residues 255-275 (TLLMLMSFFVLMTIYDTIVSC). The Extracellular segment spans residues 276–285 (SRTMFLNDPT). A helical transmembrane segment spans residues 286–306 (SYNMQIFVVHIYATVSPFVFM). At 307–319 (STEKHIVNCLRSV) the chain is on the cytoplasmic side.

It belongs to the G-protein coupled receptor 1 family. Expressed in a subset of sensory neurons located in the apical layer of the vomeronasal organ.

The protein localises to the cell membrane. Functionally, putative pheromone receptor implicated in the regulation of social as well as reproductive behavior. In Mus musculus (Mouse), this protein is Vomeronasal type-1 receptor 51 (Vmn1r51).